The primary structure comprises 475 residues: MASNPLDNNMPTTPVEEKIPVASYSPSSSGSSSGASLLVDIMCGSKETEDEEVDSDEWDKPETENISDLDERSEMVRYLRASGYAKFLEKYLIEEELPVRSILKKLGINLPSALEEFEDIDLLPLLKEVLKREVARRIKLPHFNTFEDVVNLLKKAKNVVVLVGAGISTSLGILDFRSDNGFYARLARHGLSEPSEMFDIHTFRENPEIFYTFARDLLPETNHYSPSHAFIRLLEKKNKLSTLFTQNIDNLEKKTGLSDNKIIQCHGSFATATCIKCKHKVDGSELYEDIRNQRVSYCNECGKPPLKLRRVGQNKKEKHYFSDGDSESSEDDLAQPGIMKPDITFFGEALPDSFFNKVGSGELEETDLLICIGTSLKVAPVSELISVIPPTTPQIYISRTPVRHTQFDVNFLSPYCDWVIVEICKRAGWLNELQALCDLPECHSGSKTRAFETDLDIKFEEPSTYHITSTTNGSC.

Over residues Met1–Thr12 the composition is skewed to polar residues. The tract at residues Met1–Ala35 is disordered. Low complexity predominate over residues Pro20–Ala35. Ser55 is subject to Phosphoserine. The region spanning Lys139 to Leu436 is the Deacetylase sirtuin-type domain. NAD(+) is bound by residues Gly164–Tyr183 and Gln246–Asp249. His266 (proton acceptor) is an active-site residue. Cys274, Cys277, Cys298, and Cys301 together coordinate Zn(2+). NAD(+) contacts are provided by residues Gly373–Ser375, Ser398–Thr400, and Cys416.

This sequence belongs to the sirtuin family. Class I subfamily. Zn(2+) is required as a cofactor.

The protein resides in the nucleus. The protein localises to the chromosome. It is found in the centromere. Its subcellular location is the telomere. It catalyses the reaction N(6)-acetyl-L-lysyl-[protein] + NAD(+) + H2O = 2''-O-acetyl-ADP-D-ribose + nicotinamide + L-lysyl-[protein]. Functionally, involved in silencing within the mating-type region, at the telomeres, and according to PubMed:12867036 also within centromeric DNA regions. Required for the localization of swi6 to the telomeres, silent mating type region, and according to PubMed:12867036 to the centromeric DNA regions. According to PubMed:15545655 not required for the localization of swi6 to centromeric foci. Deacetylates histone H3 on 'Lys-9' and 'Lys-16' of histone H4. This has a direct role in heterochromatin assembly. In Schizosaccharomyces pombe (strain 972 / ATCC 24843) (Fission yeast), this protein is NAD-dependent histone deacetylase sir2 (sir2).